The primary structure comprises 185 residues: Hypoxanthine/guanine phosphoribosyltransferase (185 aa).

The protein belongs to the purine/pyrimidine phosphoribosyltransferase family. Archaeal HPRT subfamily. In terms of assembly, homodimer.

The protein localises to the cytoplasm. The catalysed reaction is IMP + diphosphate = hypoxanthine + 5-phospho-alpha-D-ribose 1-diphosphate. It catalyses the reaction GMP + diphosphate = guanine + 5-phospho-alpha-D-ribose 1-diphosphate. The protein operates within purine metabolism; IMP biosynthesis via salvage pathway; IMP from hypoxanthine: step 1/1. In terms of biological role, catalyzes a salvage reaction resulting in the formation of IMP that is energically less costly than de novo synthesis. In Methanococcus maripaludis (strain C7 / ATCC BAA-1331), this protein is Hypoxanthine/guanine phosphoribosyltransferase.